The primary structure comprises 141 residues: Large ribosomal subunit protein uL11 (141 aa).

This sequence belongs to the universal ribosomal protein uL11 family. As to quaternary structure, part of the ribosomal stalk of the 50S ribosomal subunit. Interacts with L10 and the large rRNA to form the base of the stalk. L10 forms an elongated spine to which L12 dimers bind in a sequential fashion forming a multimeric L10(L12)X complex. Post-translationally, one or more lysine residues are methylated.

Forms part of the ribosomal stalk which helps the ribosome interact with GTP-bound translation factors. In Streptococcus suis (strain 05ZYH33), this protein is Large ribosomal subunit protein uL11.